A 326-amino-acid chain; its full sequence is MNKGVSLDNCVPKFFKVYLPDESGDDMVLPISFTRFLPKSLPETVTVRSISGNIWKLELKKCCGDDDTEKFVMVNGWKRIVKDEDLKGGDFLEFEFDGSSCFHFCIYEHRTMCKKIRRSSDQSEEIKVESDSDEQNQASDDVLSLDEDDDDSDYNCGEDNDSDDYADEAAVEKDDNDADDEDVDNVADDVPVEDDDYVEAFDSRDHAKADDDDEDERQYLDDRENPSFTLILNPKKKSQLLIPARVIKDYDLHFPESITLVDPLVKKFGTLEKQIKIQTNGSVFVKGFGSIIRRNKVKTTDKMIFEIKKTGDNNLVQTIKIHIISG.

The segment at residues 12–110 (PKFFKVYLPD…CFHFCIYEHR (99 aa)) is a DNA-binding region (TF-B3). Residues 124-222 (EEIKVESDSD…DEDERQYLDD (99 aa)) form a disordered region. The span at 143–199 (LSLDEDDDDSDYNCGEDNDSDDYADEAAVEKDDNDADDEDVDNVADDVPVEDDDYVE) shows a compositional bias: acidic residues.

It is found in the nucleus. The protein is B3 domain-containing protein At5g60130 of Arabidopsis thaliana (Mouse-ear cress).